A 413-amino-acid polypeptide reads, in one-letter code: Alpha-1-antitrypsin-like protein GS55-MS (413 aa).

Positions 1–24 are cleaved as a signal peptide; sequence MPSSISWGLLLLAGLSCLVAGSLA. N-linked (GlcNAc...) asparagine glycosylation is found at Asn65, Asn102, and Asn266. The RCL stretch occupies residues 368-387; the sequence is GATFLEMMPMSLPPEVKFDK.

It belongs to the serpin family.

It is found in the secreted. Functionally, inhibitor of serine proteases. Its primary target is elastase, but it also has a moderate affinity for plasmin and thrombin. This chain is Alpha-1-antitrypsin-like protein GS55-MS, found in Ictidomys tridecemlineatus (Thirteen-lined ground squirrel).